Here is an 834-residue protein sequence, read N- to C-terminus: Glycerol-3-phosphate acyltransferase (834 aa).

The HXXXXD motif motif lies at 309-314 (CHRSHI).

This sequence belongs to the GPAT/DAPAT family.

The protein localises to the cell inner membrane. It carries out the reaction sn-glycerol 3-phosphate + an acyl-CoA = a 1-acyl-sn-glycero-3-phosphate + CoA. Its pathway is phospholipid metabolism; CDP-diacylglycerol biosynthesis; CDP-diacylglycerol from sn-glycerol 3-phosphate: step 1/3. This chain is Glycerol-3-phosphate acyltransferase, found in Pseudomonas aeruginosa (strain LESB58).